Reading from the N-terminus, the 832-residue chain is Thymine dioxygenase JBP1-A (832 aa).

The segment covering 1–12 has biased composition (basic and acidic residues); it reads MKQKRGKQDVKM. Residues 1-24 are disordered; the sequence is MKQKRGKQDVKMLESAPPQLLPKK. The interval 80 to 282 is thymine dioxygenase; that stretch reads VVGGVFLPGA…RLTCVCYYRA (203 aa). Residues histidine 207, aspartate 209, and histidine 257 each contribute to the Fe cation site. Arginine 273 is a 2-oxoglutarate binding site. The segment at 409–578 is DNA-binding JBP1 domain; it reads LGGALKAAEE…IEEARRRGSS (170 aa).

This sequence belongs to the TET family. JBP1 subfamily. In terms of assembly, monomer. Binds to DNA as a monomer. The cofactor is Fe(2+).

The protein resides in the nucleus. It catalyses the reaction thymine + 2-oxoglutarate + O2 = 5-hydroxymethyluracil + succinate + CO2. Its function is as follows. Dioxygenase that catalyzes the first step of DNA base J (beta-d-glucosyl-HOMedU) biosynthesis by converting thymine to 5-hydroxymethyluracil (HOMedU). DNA base J is a hypermodified thymidine residue found in the genome of kinetoplastid parasites, which is localized primarily to repetitive DNA, namely the telomeres, and is implicated in the regulation of antigenic variation. Also specifically binds to base J-containing DNA (J-DNA). Involved in propagation and maintenance of DNA base J synthesis initiated by JBP2 by specifically binding already synthesized DNA base J and propagating J synthesis. Thymine dioxygenase activity and J-DNA-binding are independent functions. The sequence is that of Thymine dioxygenase JBP1-A (JBP1A) from Trypanosoma cruzi (strain CL Brener).